Reading from the N-terminus, the 377-residue chain is Adaptive-response sensory kinase SasA (377 aa).

Positions 154–373 constitute a Histidine kinase domain; it reads MLVHDLRSPL…SFHFTLPVYR (220 aa). His-157 bears the Phosphohistidine; by autocatalysis mark.

As to quaternary structure, homooligomerizes. Interacts with KaiC. Participates in the KaiABC clock complex, whose core is composed of a KaiC homohexamer, 6 KaiB and up to 6 KaiA dimers. SasA and KaiB(fs) compete to bind to KaiC.

It carries out the reaction ATP + protein L-histidine = ADP + protein N-phospho-L-histidine.. Member of the two-component regulatory system SasA/RpaA involved in genome-wide circadian gene expression. One of several clock output pathways. Participates in the Kai clock protein complex, the main circadian regulator in cyanobacteria, via its interaction with KaiC. KaiC enhances the autophosphorylation activity of SasA, which then transfers its phosphate group to RpaA to activate it. In addition to its output function, recruits fold-shifted KaiB (KaiB(fs)) to KaiC to cooperatively form the KaiB(6):KaiC(6) complex (independent of SasA kinase activity). Required for robustness of the circadian rhythm of gene expression and is involved in clock output, also required for adaptation to light/dark cycles. The sequence is that of Adaptive-response sensory kinase SasA from Synechococcus sp. (strain JA-3-3Ab) (Cyanobacteria bacterium Yellowstone A-Prime).